A 178-amino-acid chain; its full sequence is MKDDNIENNNIEEENLNIETQVVANEEIALLKAEIKELQDKLIRTTAEIDNTRKRLEKARDEAKDYAIATFAKELLNVSDNLSRALAHKPSNADVEVTNIISGVQMTKDELDKIFHKHHIEEIKPEIGSMFDYNVHNAISHIEHPDHKPNSIITLMQSGYKIRDRLLRPATVQVVKKP.

It belongs to the GrpE family. Homodimer.

The protein resides in the cytoplasm. Its function is as follows. Participates actively in the response to hyperosmotic and heat shock by preventing the aggregation of stress-denatured proteins, in association with DnaK and GrpE. It is the nucleotide exchange factor for DnaK and may function as a thermosensor. Unfolded proteins bind initially to DnaJ; upon interaction with the DnaJ-bound protein, DnaK hydrolyzes its bound ATP, resulting in the formation of a stable complex. GrpE releases ADP from DnaK; ATP binding to DnaK triggers the release of the substrate protein, thus completing the reaction cycle. Several rounds of ATP-dependent interactions between DnaJ, DnaK and GrpE are required for fully efficient folding. The chain is Protein GrpE from Rickettsia typhi (strain ATCC VR-144 / Wilmington).